The sequence spans 467 residues: Probable rhamnogalacturonase A (467 aa).

A signal peptide spans 1–19 (MHSLSLISLALLSPLLVNA). A disulfide bond links Cys-40 and Cys-66. Asp-217 functions as the Proton donor in the catalytic mechanism. Cys-219 and Cys-236 form a disulfide bridge. N-linked (GlcNAc...) asparagine glycosylation is found at Asn-237 and Asn-252. His-292 is an active-site residue. Asn-319 carries N-linked (GlcNAc...) asparagine glycosylation. 2 disulfides stabilise this stretch: Cys-342-Cys-348 and Cys-370-Cys-379.

The protein belongs to the glycosyl hydrolase 28 family.

It localises to the secreted. It carries out the reaction Endohydrolysis of alpha-D-GalA-(1-&gt;2)-alpha-L-Rha glycosidic bond in the rhamnogalacturonan I backbone with initial inversion of anomeric configuration releasing oligosaccharides with beta-D-GalA at the reducing end.. Functionally, pectinolytic enzymes consist of four classes of enzymes: pectine lyase, polygalacturonase, pectin methylesterase and rhamnogalacturonase. Hydrolyzes alpha-D-galacturonopyranosyl-(1,2)-alpha-L-rhamnopyranosyl linkages in the backbone of the hairy regions of pectins. The sequence is that of Probable rhamnogalacturonase A (rhgA) from Aspergillus oryzae (strain ATCC 42149 / RIB 40) (Yellow koji mold).